We begin with the raw amino-acid sequence, 417 residues long: UPF0754 membrane protein PCC8801_0398 (417 aa).

The next 2 membrane-spanning stretches (helical) occupy residues 11-31 (FSLL…GYFT) and 395-415 (IVNI…ILLI).

This sequence belongs to the UPF0754 family.

The protein localises to the cell inner membrane. The sequence is that of UPF0754 membrane protein PCC8801_0398 from Rippkaea orientalis (strain PCC 8801 / RF-1) (Cyanothece sp. (strain PCC 8801)).